Reading from the N-terminus, the 635-residue chain is Threonine--tRNA ligase (635 aa).

Positions 1-61 (MVSIRLPDGS…DRDASLAIVT (61 aa)) constitute a TGS domain. The catalytic stretch occupies residues 242 to 533 (DHRKLGKQLD…LIEHHAGAMP (292 aa)). Residues Cys-333, His-384, and His-510 each coordinate Zn(2+).

Belongs to the class-II aminoacyl-tRNA synthetase family. As to quaternary structure, homodimer. Zn(2+) serves as cofactor.

It localises to the cytoplasm. It carries out the reaction tRNA(Thr) + L-threonine + ATP = L-threonyl-tRNA(Thr) + AMP + diphosphate + H(+). Catalyzes the attachment of threonine to tRNA(Thr) in a two-step reaction: L-threonine is first activated by ATP to form Thr-AMP and then transferred to the acceptor end of tRNA(Thr). Also edits incorrectly charged L-seryl-tRNA(Thr). This Burkholderia cenocepacia (strain ATCC BAA-245 / DSM 16553 / LMG 16656 / NCTC 13227 / J2315 / CF5610) (Burkholderia cepacia (strain J2315)) protein is Threonine--tRNA ligase.